The primary structure comprises 340 residues: Probable rRNA-processing protein EBP2 homolog (340 aa).

Residues M1 to K10 show a composition bias toward basic residues. 2 disordered regions span residues M1–E59 and H245–R340. Composition is skewed to acidic residues over residues P23–A37 and M46–E59. Positions Q206–H245 form a coiled coil. Gly residues-rich tracts occupy residues G264 to G277 and P318 to G333.

The protein belongs to the EBP2 family.

It localises to the nucleus. The protein resides in the nucleolus. In terms of biological role, required for the processing of the 27S pre-rRNA. This is Probable rRNA-processing protein EBP2 homolog from Caenorhabditis elegans.